We begin with the raw amino-acid sequence, 343 residues long: ATPase GET3 (343 aa).

32 to 39 contacts ATP; the sequence is KGGVGKTT. Asp61 is an active-site residue. Glu245 and Asn272 together coordinate ATP. The Zn(2+) site is built by Cys283 and Cys286.

The protein belongs to the arsA ATPase family. As to quaternary structure, homodimer.

It is found in the cytoplasm. The protein resides in the endoplasmic reticulum. Its function is as follows. ATPase required for the post-translational delivery of tail-anchored (TA) proteins to the endoplasmic reticulum. Recognizes and selectively binds the transmembrane domain of TA proteins in the cytosol. This complex then targets to the endoplasmic reticulum by membrane-bound receptors, where the tail-anchored protein is released for insertion. This process is regulated by ATP binding and hydrolysis. ATP binding drives the homodimer towards the closed dimer state, facilitating recognition of newly synthesized TA membrane proteins. ATP hydrolysis is required for insertion. Subsequently, the homodimer reverts towards the open dimer state, lowering its affinity for the membrane-bound receptor, and returning it to the cytosol to initiate a new round of targeting. In Pyricularia oryzae (strain 70-15 / ATCC MYA-4617 / FGSC 8958) (Rice blast fungus), this protein is ATPase GET3.